We begin with the raw amino-acid sequence, 145 residues long: Oleosin L (145 aa).

Residue Ala-2 is modified to N-acetylalanine. 2 helical membrane passes run Gly-36–Ala-56 and Leu-59–Ala-79. The Proline-knot signature appears at Pro-58–Pro-69. Positions Lys-123–Glu-132 are enriched in basic and acidic residues. Residues Lys-123 to Ser-145 form a disordered region. Residues Gln-133–Ser-145 are compositionally biased toward polar residues.

Belongs to the oleosin family. Expressed in seeds (at protein level).

It is found in the lipid droplet. The protein resides in the membrane. Its function is as follows. May have a structural role to stabilize the lipid body during desiccation of the seed by preventing coalescence of the oil. Probably interacts with both lipid and phospholipid moieties of lipid bodies. May also provide recognition signals for specific lipase anchorage in lipolysis during seedling growth. This is Oleosin L from Sesamum indicum (Oriental sesame).